We begin with the raw amino-acid sequence, 147 residues long: E3 ubiquitin-protein ligase RNF181 homolog (147 aa).

The RING-type; atypical zinc-finger motif lies at 70-111 (CSVCKEPAEEGQKYRILPCKHEFHEECILLWLKKTNSCPLCR).

Belongs to the RNF181 family.

It catalyses the reaction S-ubiquitinyl-[E2 ubiquitin-conjugating enzyme]-L-cysteine + [acceptor protein]-L-lysine = [E2 ubiquitin-conjugating enzyme]-L-cysteine + N(6)-ubiquitinyl-[acceptor protein]-L-lysine.. It functions in the pathway protein modification; protein ubiquitination. E3 ubiquitin-protein ligase which accepts ubiquitin from an E2 ubiquitin-conjugating enzyme in the form of a thioester and then directly transfers the ubiquitin to targeted substrates. In Drosophila melanogaster (Fruit fly), this protein is E3 ubiquitin-protein ligase RNF181 homolog.